A 388-amino-acid polypeptide reads, in one-letter code: Mannitol-1-phosphate 5-dehydrogenase (388 aa).

Position 5 to 16 (5 to 16 (AIQFGGGNIGRG)) interacts with NAD(+). The active site involves Lys-213.

Belongs to the mannitol dehydrogenase family. Monomer.

The enzyme catalyses D-mannitol 1-phosphate + NAD(+) = beta-D-fructose 6-phosphate + NADH + H(+). In terms of biological role, catalyzes the NAD(H)-dependent interconversion of D-fructose 6-phosphate and D-mannitol 1-phosphate in the mannitol metabolic pathway. The sequence is that of Mannitol-1-phosphate 5-dehydrogenase (mpdA) from Aspergillus clavatus (strain ATCC 1007 / CBS 513.65 / DSM 816 / NCTC 3887 / NRRL 1 / QM 1276 / 107).